A 366-amino-acid chain; its full sequence is MTIKTEEFLLNLGPQHPSTHGVFRIVLTLDGETVVKAVPVPGYLHRGIEKLLESRTYTQVIPYTDRLDYLAGMLMNWGYVHAVEKLMEVEIPERAEYIRVIVGELSRIASHLVATGAYAADIGGLTGFIYTFRDREEIMDLFEMISGARLTPSFMRIGGVAYDIPDGFMERCKKFVDYLPEAIKEYNTLITGNEIFQARTKNVAILSAEKAIDMSLSGPVLRATGVNYDLRKVRPYSVYERFEFEVPLGTKGDCFDRYYIRLLEMEQSARIIQQAMDQIPEGPIRAKIPKMIKPPVGEAYAEIESSKGIMGTYVVSDGSTKPYRVHFRRPSFVNLGYLNEMLRGWKIADVIAILGSIDIVLGEVDA.

Belongs to the complex I 49 kDa subunit family. As to quaternary structure, NDH-1 is composed of 14 different subunits. Subunits NuoB, C, D, E, F, and G constitute the peripheral sector of the complex.

The protein resides in the cell membrane. The enzyme catalyses a quinone + NADH + 5 H(+)(in) = a quinol + NAD(+) + 4 H(+)(out). Functionally, NDH-1 shuttles electrons from NADH, via FMN and iron-sulfur (Fe-S) centers, to quinones in the respiratory chain. The immediate electron acceptor for the enzyme in this species is believed to be a menaquinone. Couples the redox reaction to proton translocation (for every two electrons transferred, four hydrogen ions are translocated across the cytoplasmic membrane), and thus conserves the redox energy in a proton gradient. The polypeptide is NADH-quinone oxidoreductase subunit D (Desulforamulus reducens (strain ATCC BAA-1160 / DSM 100696 / MI-1) (Desulfotomaculum reducens)).